A 213-amino-acid chain; its full sequence is Orotate phosphoribosyltransferase (213 aa).

Lys26 lines the 5-phospho-alpha-D-ribose 1-diphosphate pocket. An orotate-binding site is contributed by 34–35 (FF). 5-phospho-alpha-D-ribose 1-diphosphate-binding positions include 72-73 (YK), Arg99, Lys100, Lys103, His105, and 124-132 (DDVITAGTA). Thr128 and Arg156 together coordinate orotate.

Belongs to the purine/pyrimidine phosphoribosyltransferase family. PyrE subfamily. As to quaternary structure, homodimer. Mg(2+) serves as cofactor.

The catalysed reaction is orotidine 5'-phosphate + diphosphate = orotate + 5-phospho-alpha-D-ribose 1-diphosphate. The protein operates within pyrimidine metabolism; UMP biosynthesis via de novo pathway; UMP from orotate: step 1/2. Catalyzes the transfer of a ribosyl phosphate group from 5-phosphoribose 1-diphosphate to orotate, leading to the formation of orotidine monophosphate (OMP). This Aliivibrio fischeri (strain MJ11) (Vibrio fischeri) protein is Orotate phosphoribosyltransferase.